We begin with the raw amino-acid sequence, 214 residues long: ATP phosphoribosyltransferase (214 aa).

It belongs to the ATP phosphoribosyltransferase family. Short subfamily. As to quaternary structure, heteromultimer composed of HisG and HisZ subunits.

The protein localises to the cytoplasm. It catalyses the reaction 1-(5-phospho-beta-D-ribosyl)-ATP + diphosphate = 5-phospho-alpha-D-ribose 1-diphosphate + ATP. Its pathway is amino-acid biosynthesis; L-histidine biosynthesis; L-histidine from 5-phospho-alpha-D-ribose 1-diphosphate: step 1/9. In terms of biological role, catalyzes the condensation of ATP and 5-phosphoribose 1-diphosphate to form N'-(5'-phosphoribosyl)-ATP (PR-ATP). Has a crucial role in the pathway because the rate of histidine biosynthesis seems to be controlled primarily by regulation of HisG enzymatic activity. The sequence is that of ATP phosphoribosyltransferase from Methylibium petroleiphilum (strain ATCC BAA-1232 / LMG 22953 / PM1).